Here is a 190-residue protein sequence, read N- to C-terminus: Dual-action ribosomal maturation protein DarP (190 aa).

Residues 1 to 31 are disordered; it reads MIHADHDDNLPDDEEGLPLPPSKSQRKRDMH.

It belongs to the DarP family.

It localises to the cytoplasm. Functionally, member of a network of 50S ribosomal subunit biogenesis factors which assembles along the 30S-50S interface, preventing incorrect 23S rRNA structures from forming. Promotes peptidyl transferase center (PTC) maturation. The protein is Dual-action ribosomal maturation protein DarP of Aromatoleum aromaticum (strain DSM 19018 / LMG 30748 / EbN1) (Azoarcus sp. (strain EbN1)).